Reading from the N-terminus, the 132-residue chain is AP-2 complex subunit sigma (132 aa).

The protein belongs to the adaptor complexes small subunit family. As to quaternary structure, adaptor protein complex 2 (AP-2) is a heterotetramer composed of two large adaptins (alpha-type and beta-type subunits), a medium adaptin (mu-type subunit AP50) and a small adaptin (sigma-type subunit AP17). As to expression, widely expressed in the embryo, endosperm, leaf and root.

It is found in the cell membrane. Its subcellular location is the membrane. The protein resides in the coated pit. Component of the adaptor complexes which link clathrin to receptors in coated vesicles. Clathrin-associated protein complexes are believed to interact with the cytoplasmic tails of membrane proteins, leading to their selection and concentration. AP2S1/AP17 is a subunit of the plasma membrane adaptor. The complex binds polyphosphoinositides. This Zea mays (Maize) protein is AP-2 complex subunit sigma (AP-17).